A 123-amino-acid polypeptide reads, in one-letter code: Large ribosomal subunit protein bL12 (123 aa).

The protein belongs to the bacterial ribosomal protein bL12 family. As to quaternary structure, homodimer. Part of the ribosomal stalk of the 50S ribosomal subunit. Forms a multimeric L10(L12)X complex, where L10 forms an elongated spine to which 2 to 4 L12 dimers bind in a sequential fashion. Binds GTP-bound translation factors.

In terms of biological role, forms part of the ribosomal stalk which helps the ribosome interact with GTP-bound translation factors. Is thus essential for accurate translation. The polypeptide is Large ribosomal subunit protein bL12 (Shewanella amazonensis (strain ATCC BAA-1098 / SB2B)).